Reading from the N-terminus, the 362-residue chain is Fructose-bisphosphate aldolase (362 aa).

S65 contributes to the D-glyceraldehyde 3-phosphate binding site. D112 serves as the catalytic Proton donor. 4 residues coordinate Zn(2+): H113, D147, E177, and H229. G230 is a dihydroxyacetone phosphate binding site. Residue H268 participates in Zn(2+) binding. Dihydroxyacetone phosphate-binding positions include 269-271 (GGS) and 290-293 (NVDT).

The protein belongs to the class II fructose-bisphosphate aldolase family. Homodimer. It depends on Zn(2+) as a cofactor.

The catalysed reaction is beta-D-fructose 1,6-bisphosphate = D-glyceraldehyde 3-phosphate + dihydroxyacetone phosphate. It functions in the pathway carbohydrate degradation; glycolysis; D-glyceraldehyde 3-phosphate and glycerone phosphate from D-glucose: step 4/4. Functionally, catalyzes the aldol condensation of dihydroxyacetone phosphate (DHAP or glycerone-phosphate) with glyceraldehyde 3-phosphate (G3P) to form fructose 1,6-bisphosphate (FBP) in gluconeogenesis and the reverse reaction in glycolysis. The chain is Fructose-bisphosphate aldolase (fbaA) from Aspergillus oryzae (strain ATCC 42149 / RIB 40) (Yellow koji mold).